Here is a 210-residue protein sequence, read N- to C-terminus: Na(+)-translocating NADH-quinone reductase subunit D (210 aa).

5 helical membrane passes run 42 to 62 (FVMT…VSLI), 72 to 92 (IIVQ…VLKA), 103 to 123 (VFVG…AFAM), 131 to 151 (LIDG…VGFF), and 178 to 198 (NGLM…IWVI).

This sequence belongs to the NqrDE/RnfAE family. In terms of assembly, composed of six subunits; NqrA, NqrB, NqrC, NqrD, NqrE and NqrF.

Its subcellular location is the cell inner membrane. It catalyses the reaction a ubiquinone + n Na(+)(in) + NADH + H(+) = a ubiquinol + n Na(+)(out) + NAD(+). This reaction is tightly coupled to the Na(+) pumping activity and specifically requires Na(+) for activity. Inhibited by korormicin and 2-N-heptyl-4-hydroxyquinoline N-oxide (HQNO). Functionally, NQR complex catalyzes the reduction of ubiquinone-1 to ubiquinol by two successive reactions, coupled with the transport of Na(+) ions from the cytoplasm to the periplasm. NqrA to NqrE are probably involved in the second step, the conversion of ubisemiquinone to ubiquinol. The protein is Na(+)-translocating NADH-quinone reductase subunit D of Vibrio alginolyticus.